The chain runs to 239 residues: Transmembrane emp24 domain-containing protein 6 (239 aa).

Positions 1-21 are cleaved as a signal peptide; it reads MFPLLLVAELVVLSLVTSVKS. Topologically, residues 22-200 are lumenal; the sequence is QETDPLHGSK…FFLLQSNYTY (179 aa). A GOLD domain is found at 53-138; it reads IECFWQFADQ…SIQVYLNFGV (86 aa). Residues N156 and N197 are each glycosylated (N-linked (GlcNAc...) asparagine). The chain crosses the membrane as a helical span at residues 201-223; it reads VNWWSTAQSLAIVLSGALQLYFL. Topologically, residues 224 to 239 are cytoplasmic; sequence KRLFTASTTDTKKPRC.

Belongs to the EMP24/GP25L family.

The protein resides in the endoplasmic reticulum membrane. The chain is Transmembrane emp24 domain-containing protein 6 (Tmed6) from Mus musculus (Mouse).